We begin with the raw amino-acid sequence, 382 residues long: Pregnancy-associated glycoprotein 1 (382 aa).

Residues 1–15 (MKWLVLLGLVAFSEC) form the signal peptide. Residues 16 to 53 (IVKIPLRRVKTMRNTLSGKKMLNSFLKEHAYRLSQISF) constitute a propeptide, activation peptide. Asparagine 57 and asparagine 74 each carry an N-linked (GlcNAc...) asparagine glycan. The Peptidase A1 domain occupies 71 to 379 (YVGNITIGTP…DRGNDRIGLA (309 aa)). Residues cysteine 102 and cysteine 110 are joined by a disulfide bond. Asparagine 128 carries N-linked (GlcNAc...) asparagine glycosylation. Cystine bridges form between cysteine 263–cysteine 267 and cysteine 305–cysteine 339.

Belongs to the peptidase A1 family. In terms of tissue distribution, trophoblast and placental tissue. Produced specifically in the invasive binucleate cells of the placenta.

The protein localises to the secreted. The protein resides in the extracellular space. Has no proteolytic activity. The sequence is that of Pregnancy-associated glycoprotein 1 from Ovis aries (Sheep).